Here is a 157-residue protein sequence, read N- to C-terminus: Glutamyl-tRNA(Gln) amidotransferase subunit C, mitochondrial (157 aa).

This sequence belongs to the GatC family. Subunit of the heterotrimeric GatCAB amidotransferase (AdT) complex, composed of A, B and C subunits.

It localises to the mitochondrion. It carries out the reaction L-glutamyl-tRNA(Gln) + L-glutamine + ATP + H2O = L-glutaminyl-tRNA(Gln) + L-glutamate + ADP + phosphate + H(+). Its function is as follows. Allows the formation of correctly charged Gln-tRNA(Gln) through the transamidation of misacylated Glu-tRNA(Gln) in the mitochondria. The reaction takes place in the presence of glutamine and ATP through an activated gamma-phospho-Glu-tRNA(Gln). This Drosophila virilis (Fruit fly) protein is Glutamyl-tRNA(Gln) amidotransferase subunit C, mitochondrial.